Reading from the N-terminus, the 392-residue chain is Probable inactive serine/threonine-protein kinase DDB_G0280855 (392 aa).

A Protein kinase domain is found at 46–349 (ITKKTIYACD…IERIIQHPYF (304 aa)). Residues 52–60 (YACDINGTM) and Lys75 each bind ATP.

The protein belongs to the protein kinase superfamily. CMGC Ser/Thr protein kinase family. MAP kinase subfamily.

This is Probable inactive serine/threonine-protein kinase DDB_G0280855 from Dictyostelium discoideum (Social amoeba).